The primary structure comprises 256 residues: Floral homeotic protein APETALA 1 (256 aa).

An MADS-box domain is found at 1 to 61 (MGRGRVQLKR…GKLFEYSTDS (61 aa)). One can recognise a K-box domain in the interval 88-178 (NTNWSMEYNR…SKQIKEREKI (91 aa)). The stretch at 88-185 (NTNWSMEYNR…EKILRAQQEQ (98 aa)) forms a coiled coil.

Homodimer capable of binding to CArG-box sequences. Heterodimer with SEP3, AP1 and SVP. Binds AP3/PI to form a ternary complex. Interacts with the SEU-LUG corepressor complex when complexed to AGL24 or SVP. Interacts with AGL15 and AGL16. Interacts with TT16/AGL32. Expressed in young flower primordia, later becomes localized to sepals and petals.

The protein resides in the nucleus. Its function is as follows. Transcription factor that promotes early floral meristem identity in synergy with LEAFY. Is required subsequently for the transition of an inflorescence meristem into a floral meristem. Is indispensable for normal development of sepals and petals in flowers. Positively regulates the B class homeotic proteins APETALA3 and PISTILLATA with the cooperation of LEAFY and UFO. Interacts with SEPALLATA3 or AP3/PI heterodimer to form complexes that could be involved in genes regulation during floral meristem development. Positively regulates AGAMOUS in cooperation with LEAFY. Displays a redundant function with CAULIFLOWER in the up-regulation of LEAFY. Together with AGL24 and SVP, controls the identity of the floral meristem and regulates expression of class B, C and E genes. Represses flowering time genes AGL24, SVP and SOC1 in emerging floral meristems. This Arabidopsis thaliana (Mouse-ear cress) protein is Floral homeotic protein APETALA 1 (AP1).